The primary structure comprises 445 residues: tRNA modification GTPase MnmE (445 aa).

3 residues coordinate (6S)-5-formyl-5,6,7,8-tetrahydrofolate: arginine 25, glutamate 83, and lysine 121. Residues 217-371 (GVRVVILGPP…LLTLIQEKSR (155 aa)) form the TrmE-type G domain. GTP contacts are provided by residues 227-232 (NAGKST), 246-252 (SEHPGTT), and 271-274 (DTAG). Mg(2+)-binding residues include serine 231 and threonine 252. (6S)-5-formyl-5,6,7,8-tetrahydrofolate is bound at residue lysine 445.

The protein belongs to the TRAFAC class TrmE-Era-EngA-EngB-Septin-like GTPase superfamily. TrmE GTPase family. In terms of assembly, homodimer. Heterotetramer of two MnmE and two MnmG subunits. It depends on K(+) as a cofactor.

The protein localises to the cytoplasm. Functionally, exhibits a very high intrinsic GTPase hydrolysis rate. Involved in the addition of a carboxymethylaminomethyl (cmnm) group at the wobble position (U34) of certain tRNAs, forming tRNA-cmnm(5)s(2)U34. The chain is tRNA modification GTPase MnmE from Anaplasma phagocytophilum (strain HZ).